Reading from the N-terminus, the 195-residue chain is Protein GrpE (195 aa).

The tract at residues 1-60 (MAKDEEKNSQASAAPNEGEVKAKQEQTSAKEPAAKAGETEKVADLQKQVEELTKQLDDQK) is disordered. Residues 37–60 (GETEKVADLQKQVEELTKQLDDQK) show a composition bias toward basic and acidic residues.

Belongs to the GrpE family. In terms of assembly, homodimer.

Its subcellular location is the cytoplasm. Its function is as follows. Participates actively in the response to hyperosmotic and heat shock by preventing the aggregation of stress-denatured proteins, in association with DnaK and GrpE. It is the nucleotide exchange factor for DnaK and may function as a thermosensor. Unfolded proteins bind initially to DnaJ; upon interaction with the DnaJ-bound protein, DnaK hydrolyzes its bound ATP, resulting in the formation of a stable complex. GrpE releases ADP from DnaK; ATP binding to DnaK triggers the release of the substrate protein, thus completing the reaction cycle. Several rounds of ATP-dependent interactions between DnaJ, DnaK and GrpE are required for fully efficient folding. In Limosilactobacillus fermentum (strain NBRC 3956 / LMG 18251) (Lactobacillus fermentum), this protein is Protein GrpE.